A 95-amino-acid chain; its full sequence is Aspartyl/glutamyl-tRNA(Asn/Gln) amidotransferase subunit C (95 aa).

It belongs to the GatC family. Heterotrimer of A, B and C subunits.

It carries out the reaction L-glutamyl-tRNA(Gln) + L-glutamine + ATP + H2O = L-glutaminyl-tRNA(Gln) + L-glutamate + ADP + phosphate + H(+). The catalysed reaction is L-aspartyl-tRNA(Asn) + L-glutamine + ATP + H2O = L-asparaginyl-tRNA(Asn) + L-glutamate + ADP + phosphate + 2 H(+). Its function is as follows. Allows the formation of correctly charged Asn-tRNA(Asn) or Gln-tRNA(Gln) through the transamidation of misacylated Asp-tRNA(Asn) or Glu-tRNA(Gln) in organisms which lack either or both of asparaginyl-tRNA or glutaminyl-tRNA synthetases. The reaction takes place in the presence of glutamine and ATP through an activated phospho-Asp-tRNA(Asn) or phospho-Glu-tRNA(Gln). The protein is Aspartyl/glutamyl-tRNA(Asn/Gln) amidotransferase subunit C of Pseudomonas fluorescens (strain ATCC BAA-477 / NRRL B-23932 / Pf-5).